A 138-amino-acid polypeptide reads, in one-letter code: Sec-independent protein translocase protein TatB (138 aa).

The helical transmembrane segment at 1–21 threads the bilayer; sequence MFDIGFSELLLIAVVALVVLG. The disordered stretch occupies residues 116–138; it reads VHHVHVPPPSTSTHGNNGQEKSQ. Over residues 126-138 the composition is skewed to polar residues; it reads TSTHGNNGQEKSQ.

This sequence belongs to the TatB family. The Tat system comprises two distinct complexes: a TatABC complex, containing multiple copies of TatA, TatB and TatC subunits, and a separate TatA complex, containing only TatA subunits. Substrates initially bind to the TatABC complex, which probably triggers association of the separate TatA complex to form the active translocon.

It is found in the cell inner membrane. Part of the twin-arginine translocation (Tat) system that transports large folded proteins containing a characteristic twin-arginine motif in their signal peptide across membranes. Together with TatC, TatB is part of a receptor directly interacting with Tat signal peptides. TatB may form an oligomeric binding site that transiently accommodates folded Tat precursor proteins before their translocation. The polypeptide is Sec-independent protein translocase protein TatB (Xylella fastidiosa (strain Temecula1 / ATCC 700964)).